A 161-amino-acid chain; its full sequence is Nucleotide-binding protein Lferr_1091 (161 aa).

The protein belongs to the YajQ family.

Functionally, nucleotide-binding protein. The protein is Nucleotide-binding protein Lferr_1091 of Acidithiobacillus ferrooxidans (strain ATCC 53993 / BNL-5-31) (Leptospirillum ferrooxidans (ATCC 53993)).